The primary structure comprises 191 residues: Potassium-transporting ATPase KdpC subunit (191 aa).

The chain crosses the membrane as a helical span at residues Pro-6–Thr-26.

Belongs to the KdpC family. In terms of assembly, the system is composed of three essential subunits: KdpA, KdpB and KdpC.

It is found in the cell inner membrane. Its function is as follows. Part of the high-affinity ATP-driven potassium transport (or Kdp) system, which catalyzes the hydrolysis of ATP coupled with the electrogenic transport of potassium into the cytoplasm. This subunit acts as a catalytic chaperone that increases the ATP-binding affinity of the ATP-hydrolyzing subunit KdpB by the formation of a transient KdpB/KdpC/ATP ternary complex. The chain is Potassium-transporting ATPase KdpC subunit from Klebsiella pneumoniae (strain 342).